We begin with the raw amino-acid sequence, 158 residues long: Transcriptional repressor NrdR (158 aa).

Residues 3–34 (CPYCGFEESKVVDSRSTEDHKAIRRRRECLKC) fold into a zinc finger. Residues 49–139 (VLVIKRDSNR…VYRQFKDINT (91 aa)) form the ATP-cone domain.

It belongs to the NrdR family. The cofactor is Zn(2+).

In terms of biological role, negatively regulates transcription of bacterial ribonucleotide reductase nrd genes and operons by binding to NrdR-boxes. In Clostridium novyi (strain NT), this protein is Transcriptional repressor NrdR.